The following is an 808-amino-acid chain: Sucrose synthase 1 (808 aa).

Residues 277–754 (MVFNVVILSP…GLQRIEEKYT (478 aa)) form a GT-B glycosyltransferase region.

This sequence belongs to the glycosyltransferase 1 family. Plant sucrose synthase subfamily. As to quaternary structure, homotetramer. In terms of tissue distribution, expressed in the phloem of leaves and in roots. Detected in the whole plant but more precisely confined to the vasculature in cotyledons, mature leaves and siliques.

It carries out the reaction an NDP-alpha-D-glucose + D-fructose = a ribonucleoside 5'-diphosphate + sucrose + H(+). Sucrose-cleaving enzyme that provides UDP-glucose and fructose for various metabolic pathways. The sequence is that of Sucrose synthase 1 (SUS1) from Arabidopsis thaliana (Mouse-ear cress).